Here is a 557-residue protein sequence, read N- to C-terminus: Ribonuclease J 2 (557 aa).

Positions 76, 78, 144, and 166 each coordinate Zn(2+). Substrate is bound at residue 366 to 370 (HASSH).

The protein belongs to the metallo-beta-lactamase superfamily. RNA-metabolizing metallo-beta-lactamase-like family. Bacterial RNase J subfamily. In terms of assembly, homodimer, may be a subunit of the RNA degradosome. Zn(2+) serves as cofactor.

Its subcellular location is the cytoplasm. Functionally, an RNase that has 5'-3' exonuclease and possibly endoonuclease activity. Involved in maturation of rRNA and in some organisms also mRNA maturation and/or decay. In Staphylococcus epidermidis (strain ATCC 35984 / DSM 28319 / BCRC 17069 / CCUG 31568 / BM 3577 / RP62A), this protein is Ribonuclease J 2.